We begin with the raw amino-acid sequence, 263 residues long: uncharacterized protein (263 aa).

The signal sequence occupies residues 1–22 (MGYLKRLVLYIVIMVMSVFIIG). The N-palmitoyl cysteine moiety is linked to residue cysteine 23. A lipid anchor (S-diacylglycerol cysteine) is attached at cysteine 23.

It belongs to the staphylococcal tandem lipoprotein family.

It localises to the cell membrane. This is an uncharacterized protein from Staphylococcus aureus (strain N315).